Reading from the N-terminus, the 159-residue chain is Transcriptional repressor NrdR (159 aa).

The disordered stretch occupies residues 1–26; it reads MRCPFCAHDNSQVKDSRPSEDNTSIR. Residues 3–34 fold into a zinc finger; that stretch reads CPFCAHDNSQVKDSRPSEDNTSIRRRRQCEGC. A compositionally biased stretch (basic and acidic residues) spans 11–24; the sequence is SQVKDSRPSEDNTS. The region spanning 49–139 is the ATP-cone domain; sequence VVVVKSGERR…VYRDFTEARD (91 aa).

It belongs to the NrdR family. Requires Zn(2+) as cofactor.

Functionally, negatively regulates transcription of bacterial ribonucleotide reductase nrd genes and operons by binding to NrdR-boxes. The sequence is that of Transcriptional repressor NrdR from Novosphingobium aromaticivorans (strain ATCC 700278 / DSM 12444 / CCUG 56034 / CIP 105152 / NBRC 16084 / F199).